Consider the following 304-residue polypeptide: ERTVISNLRPFTLYRIDIHSCNHEAEKLGCSASNFVFARTMPAEGADDIPGPVTWEPRPENSIFLKWPEPENPNGLILMYEIKYGSQVEDQRECVSRQEYRKYGGAKLNRLNPGNYTARIQATSLSGNGSWTEPVFFYVQAKTTYENFIHLIIALPVAVLLIVGGLVIMLYVFHRKRNNSRLGNGVMLFELMRMCWQYNPKMRPSFLEIISSIKDEMEPGFREVSFYYSEENKPPEPEELDLEPENMESVPLDPSASSSSLPLPDRHSGHKAENGPGPGVLVLRASFDERQPYAHMNGGRKNER.

Fibronectin type-III domains follow at residues 1-43 (ERTV…TMPA) and 49-142 (IPGP…VQAK). The Extracellular segment spans residues 1 to 147 (ERTVISNLRP…YVQAKTTYEN (147 aa)). N-linked (GlcNAc...) asparagine glycosylation is found at N115 and N128. The helical transmembrane segment at 148 to 168 (FIHLIIALPVAVLLIVGGLVI) threads the bilayer. Residues 169-304 (MLYVFHRKRN…HMNGGRKNER (136 aa)) lie on the Cytoplasmic side of the membrane. S225 is modified (phosphoserine; by GSK3-beta). At S229 the chain carries Phosphoserine. The tract at residues 231-304 (ENKPPEPEEL…HMNGGRKNER (74 aa)) is disordered. Residues 237–246 (PEELDLEPEN) are compositionally biased toward acidic residues. Low complexity predominate over residues 247 to 263 (MESVPLDPSASSSSLPL). Basic and acidic residues predominate over residues 264 to 273 (PDRHSGHKAE).

It belongs to the protein kinase superfamily. Tyr protein kinase family. Insulin receptor subfamily. As to quaternary structure, tetramer of 2 alpha and 2 beta chains linked by disulfide bonds. The alpha chains contribute to the formation of the ligand-binding domain, while the beta chain carries the kinase domain. Forms a hybrid receptor with INSR, the hybrid is a tetramer consisting of 1 alpha chain and 1 beta chain of INSR and 1 alpha chain and 1 beta chain of IGF1R. Interacts with ARRB1 and ARRB2. Interacts with GRB10. Interacts with RACK1. Interacts with SOCS1, SOCS2 and SOCS3. Interacts with 14-3-3 proteins. Interacts with NMD2. Interacts with MAP3K5. Interacts with STAT3. Found in a ternary complex with IGF1 and ITGAV:ITGB3 or ITGA6:ITGB4. Interacts (nascent precursor form) with ZFAND2B. In terms of processing, autophosphorylated on tyrosine residues in response to ligand binding. Autophosphorylation occurs in trans, i.e. one subunit of the dimeric receptor phosphorylates tyrosine residues on the other subunit. Autophosphorylation occurs in a sequential manner. While every single phosphorylation increases kinase activity, all three tyrosine residues in the kinase activation loop have to be phosphorylated for optimal activity. Can be autophosphorylated at additional tyrosine residues (in vitro). May also be phosphorylated at tyrosine residues by mTORC2. Autophosphorylated is followed by phosphorylation of juxtamembrane tyrosines and C-terminal serines. Phosphorylation of Ser-225 by GSK-3beta restrains kinase activity and promotes cell surface expression, it requires a priming phosphorylation at Ser-229. Dephosphorylated by PTPN1. Polyubiquitinated in the activation loop through both 'Lys-48' and 'Lys-29' linkages, promoting receptor endocytosis and subsequent degradation by the proteasome. Ubiquitination is facilitated by pre-existing phosphorylation. Post-translationally, sumoylated with SUMO1. In terms of processing, controlled by regulated intramembrane proteolysis (RIP). Undergoes metalloprotease-dependent constitutive ectodomain shedding to produce a membrane-anchored 52 kDa C-Terminal fragment which is further processed by presenilin gamma-secretase to yield an intracellular 50 kDa fragment.

Its subcellular location is the cell membrane. It catalyses the reaction L-tyrosyl-[protein] + ATP = O-phospho-L-tyrosyl-[protein] + ADP + H(+). Its activity is regulated as follows. Activated by autophosphorylation at tyrosines in the kinase activation loop; phosphorylation at all three tyrosine residues is required for optimal kinase activity. Inhibited by MSC1609119A-1, BMS-754807, PQIP, benzimidazole pyridinone, isoquinolinedione, bis-azaindole, 3-cyanoquinoline, 2,4-bis-arylamino-1,3-pyrimidine, pyrrolopyrimidine, pyrrole-5-carboxaldehyde, picropodophyllin (PPP), tyrphostin derivatives. While most inhibitors bind to the ATP binding pocket, MSC1609119A-1 functions as allosteric inhibitor and binds close to the DFG motif and the activation loop. In terms of biological role, receptor tyrosine kinase which mediates actions of insulin-like growth factor 1 (IGF1). Binds IGF1 with high affinity and IGF2 and insulin (INS) with a lower affinity. The activated IGF1R is involved in cell growth and survival control. IGF1R is crucial for tumor transformation and survival of malignant cell. Ligand binding activates the receptor kinase, leading to receptor autophosphorylation, and tyrosines phosphorylation of multiple substrates, that function as signaling adapter proteins including, the insulin-receptor substrates (IRS1/2), Shc and 14-3-3 proteins. Phosphorylation of IRSs proteins lead to the activation of two main signaling pathways: the PI3K-AKT/PKB pathway and the Ras-MAPK pathway. The result of activating the MAPK pathway is increased cellular proliferation, whereas activating the PI3K pathway inhibits apoptosis and stimulates protein synthesis. Phosphorylated IRS1 can activate the 85 kDa regulatory subunit of PI3K (PIK3R1), leading to activation of several downstream substrates, including protein AKT/PKB. AKT phosphorylation, in turn, enhances protein synthesis through mTOR activation and triggers the antiapoptotic effects of IGFIR through phosphorylation and inactivation of BAD. In parallel to PI3K-driven signaling, recruitment of Grb2/SOS by phosphorylated IRS1 or Shc leads to recruitment of Ras and activation of the ras-MAPK pathway. In addition to these two main signaling pathways IGF1R signals also through the Janus kinase/signal transducer and activator of transcription pathway (JAK/STAT). Phosphorylation of JAK proteins can lead to phosphorylation/activation of signal transducers and activators of transcription (STAT) proteins. In particular activation of STAT3, may be essential for the transforming activity of IGF1R. The JAK/STAT pathway activates gene transcription and may be responsible for the transforming activity. JNK kinases can also be activated by the IGF1R. IGF1 exerts inhibiting activities on JNK activation via phosphorylation and inhibition of MAP3K5/ASK1, which is able to directly associate with the IGF1R. When present in a hybrid receptor with INSR, binds IGF1. This Sus scrofa (Pig) protein is Insulin-like growth factor 1 receptor (IGF1R).